Reading from the N-terminus, the 226-residue chain is Ribonuclease S-7 (226 aa).

Residues 1–27 (MGITGMIYIVTMVFSLIVLILSSSTVG) form the signal peptide. Glutamine 36 is an RNA binding site. An intrachain disulfide couples cysteine 42 to cysteine 49. Residue histidine 60 coordinates RNA. Histidine 60 acts as the Proton donor in catalysis. N-linked (GlcNAc...) asparagine; alternate glycans are attached at residues asparagine 74 and asparagine 77. The cysteines at positions 75 and 119 are disulfide-linked. Residues 98 to 99 (NV), phenylalanine 108, 111 to 112 (KQ), and 115 to 116 (KH) each bind RNA. Residue glutamine 112 is part of the active site. Histidine 116 serves as the catalytic Proton acceptor. N-linked (GlcNAc...) asparagine glycosylation is found at asparagine 126, asparagine 144, and asparagine 172. Intrachain disulfides connect cysteine 183/cysteine 220 and cysteine 198/cysteine 209.

It belongs to the RNase T2 family. In terms of processing, the N-glycans attached at Asn-74 and Asn-77 consist of either monosaccharide (GlcNAc) or disaccharide (GlcNAc-GlcNAc) that could not be distinguished. The N-glycan at Asn-144 contains mannose and xylose, and at Asn-126 contains mannose, xylose and fucose. The N-glycan at Asn-172 consists of disaccharide (GlcNAc-GlcNAc).

The enzyme catalyses a ribonucleotidyl-ribonucleotide-RNA + H2O = a 3'-end 3'-phospho-ribonucleotide-RNA + a 5'-end dephospho-ribonucleoside-RNA + H(+). Its function is as follows. Self-incompatibility (SI) is the inherited ability of a flowering plant to prevent self-fertilization by discriminating between self and non-self pollen during pollination. In many species, self-incompatibility is controlled by the single, multiallelic locus S. The chain is Ribonuclease S-7 from Pyrus pyrifolia (Chinese pear).